The following is a 314-amino-acid chain: Ribosomal protein L11 methyltransferase (314 aa).

Residues Thr161, Gly182, Asp204, and Asn248 each coordinate S-adenosyl-L-methionine.

The protein belongs to the methyltransferase superfamily. PrmA family.

It is found in the cytoplasm. The enzyme catalyses L-lysyl-[protein] + 3 S-adenosyl-L-methionine = N(6),N(6),N(6)-trimethyl-L-lysyl-[protein] + 3 S-adenosyl-L-homocysteine + 3 H(+). Methylates ribosomal protein L11. In Listeria monocytogenes serotype 4a (strain HCC23), this protein is Ribosomal protein L11 methyltransferase.